The sequence spans 201 residues: Ephrin-A4 (201 aa).

The signal sequence occupies residues 1-25 (MRLLPLLRTVLWAAFLGSPLRGGSS). Residues 26–155 (LRHVVYWNSS…RLQVSVCCKE (130 aa)) enclose the Ephrin RBD domain. N33 is a glycosylation site (N-linked (GlcNAc...) asparagine). 2 cysteine pairs are disulfide-bonded: C58–C99 and C86–C144. S170 carries GPI-anchor amidated serine lipidation. Positions 171–201 (GTSGWRGGDTPSPLCLLLLLLLLILRLLRIL) are cleaved as a propeptide — removed in mature form.

This sequence belongs to the ephrin family. As to expression, expressed in the adult spleen, lymph node, prostate, ovary, small intestine, and colon, and in fetal heart, lung, liver and kidney. Also detected in hematopoietic cell lines.

It localises to the cell membrane. It is found in the secreted. Its function is as follows. Cell surface GPI-bound ligand for Eph receptors, a family of receptor tyrosine kinases which are crucial for migration, repulsion and adhesion during neuronal, vascular and epithelial development. Binds promiscuously Eph receptors residing on adjacent cells, leading to contact-dependent bidirectional signaling into neighboring cells. May play a role in the interaction between activated B-lymphocytes and dendritic cells in tonsils. This chain is Ephrin-A4 (EFNA4), found in Homo sapiens (Human).